The chain runs to 289 residues: Purine nucleoside phosphorylase (289 aa).

N-acetylmethionine is present on M1. Phosphate contacts are provided by residues S33, H64, and 84-86 (RFH). Y88 lines the a purine D-ribonucleoside pocket. Residue A116 participates in phosphate binding. A purine D-ribonucleoside is bound by residues E201 and M219. Phosphate is bound at residue S220. Residue N243 coordinates a purine D-ribonucleoside. S251 carries the post-translational modification Phosphoserine. H257 lines the a purine D-ribonucleoside pocket.

The protein belongs to the PNP/MTAP phosphorylase family. As to quaternary structure, homotrimer.

It is found in the cytoplasm. It carries out the reaction inosine + phosphate = alpha-D-ribose 1-phosphate + hypoxanthine. It catalyses the reaction guanosine + phosphate = alpha-D-ribose 1-phosphate + guanine. The catalysed reaction is 2'-deoxyguanosine + phosphate = 2-deoxy-alpha-D-ribose 1-phosphate + guanine. The enzyme catalyses 2'-deoxyinosine + phosphate = 2-deoxy-alpha-D-ribose 1-phosphate + hypoxanthine. It participates in purine metabolism; purine nucleoside salvage. In terms of biological role, catalyzes the phosphorolytic breakdown of the N-glycosidic bond in the beta-(deoxy)ribonucleoside molecules, with the formation of the corresponding free purine bases and pentose-1-phosphate. Preferentially acts on 6-oxopurine nucleosides including inosine and guanosine. The sequence is that of Purine nucleoside phosphorylase (PNP) from Bos taurus (Bovine).